The sequence spans 316 residues: Transaldolase (316 aa).

K127 (schiff-base intermediate with substrate) is an active-site residue.

This sequence belongs to the transaldolase family. Type 2 subfamily.

It is found in the cytoplasm. It carries out the reaction D-sedoheptulose 7-phosphate + D-glyceraldehyde 3-phosphate = D-erythrose 4-phosphate + beta-D-fructose 6-phosphate. The protein operates within carbohydrate degradation; pentose phosphate pathway; D-glyceraldehyde 3-phosphate and beta-D-fructose 6-phosphate from D-ribose 5-phosphate and D-xylulose 5-phosphate (non-oxidative stage): step 2/3. Its function is as follows. Transaldolase is important for the balance of metabolites in the pentose-phosphate pathway. The polypeptide is Transaldolase (Helicobacter pylori (strain HPAG1)).